Consider the following 291-residue polypeptide: Gamma-sarcoglycan (291 aa).

Topologically, residues 1–37 are cytoplasmic; that stretch reads MVREQYTTATEGICIERPENQYVYKIGIYGWRKRCLY. A helical; Signal-anchor for type II membrane protein transmembrane segment spans residues 38–58; that stretch reads LFVLLLLIILVVNLALTIWIL. Residues 59–291 are Extracellular-facing; it reads KVMWFSPAGM…TCQEHNHICL (233 aa). N110 carries N-linked (GlcNAc...) asparagine glycosylation. 2 disulfides stabilise this stretch: C265-C290 and C267-C283.

This sequence belongs to the sarcoglycan beta/delta/gamma/zeta family. In terms of assembly, interacts with the syntrophin SNTA1. Cross-link to form 2 major subcomplexes: one consisting of SGCB, SGCD and SGCG and the other consisting of SGCB and SGCD. The association between SGCB and SGCG is particularly strong while SGCA is loosely associated with the other sarcoglycans. Interacts with FLNC. In terms of tissue distribution, expressed in skeletal and heart muscle.

It localises to the cell membrane. The protein localises to the sarcolemma. It is found in the cytoplasm. The protein resides in the cytoskeleton. In terms of biological role, component of the sarcoglycan complex, a subcomplex of the dystrophin-glycoprotein complex which forms a link between the F-actin cytoskeleton and the extracellular matrix. This Homo sapiens (Human) protein is Gamma-sarcoglycan (SGCG).